A 204-amino-acid chain; its full sequence is Cytochrome b6 (204 aa).

A helical membrane pass occupies residues 23-43; sequence YCLGGITLTSFLVQVATGSAM. Position 24 (cysteine 24) interacts with heme c. Residues histidine 75 and histidine 89 each coordinate heme b. The next 3 helical transmembrane spans lie at 81-101, 107-127, and 136-157; these read MMVL…GFKK, WVTG…GYSL, and AVKI…LVEL. Heme b contacts are provided by histidine 176 and histidine 191. Residues 177 to 197 traverse the membrane as a helical segment; the sequence is TFILPLLTAVFMPMHFLMIRK.

Belongs to the cytochrome b family. PetB subfamily. In terms of assembly, the 4 large subunits of the cytochrome b6-f complex are cytochrome b6, subunit IV (17 kDa polypeptide, PetD), cytochrome f and the Rieske protein, while the 4 small subunits are PetG, PetL, PetM and PetN. The complex functions as a dimer. Heme b serves as cofactor. Heme c is required as a cofactor.

The protein localises to the plastid. The protein resides in the chloroplast thylakoid membrane. Component of the cytochrome b6-f complex, which mediates electron transfer between photosystem II (PSII) and photosystem I (PSI), cyclic electron flow around PSI, and state transitions. This chain is Cytochrome b6, found in Picea abies (Norway spruce).